Here is a 49-residue protein sequence, read N- to C-terminus: DNA-directed RNA polymerase subunit Rpo12 (49 aa).

Zn(2+)-binding residues include cysteine 11, cysteine 27, and cysteine 30.

The protein belongs to the archaeal Rpo12/eukaryotic RPC10 RNA polymerase subunit family. In terms of assembly, part of the RNA polymerase complex. It depends on Zn(2+) as a cofactor.

The protein localises to the cytoplasm. It catalyses the reaction RNA(n) + a ribonucleoside 5'-triphosphate = RNA(n+1) + diphosphate. DNA-dependent RNA polymerase (RNAP) catalyzes the transcription of DNA into RNA using the four ribonucleoside triphosphates as substrates. In Pyrococcus abyssi (strain GE5 / Orsay), this protein is DNA-directed RNA polymerase subunit Rpo12.